Reading from the N-terminus, the 449-residue chain is Clusterin (449 aa).

Residues 1 to 21 (MKTLLLLVGLLLTLENGQVLG) form the signal peptide. Positions 77 to 80 (KKKK) match the Nuclear localization signal motif. 2 N-linked (GlcNAc...) asparagine glycosylation sites follow: Asn-85 and Asn-102. 5 disulfides stabilise this stretch: Cys-101-Cys-313, Cys-112-Cys-305, Cys-115-Cys-302, Cys-120-Cys-295, and Cys-128-Cys-285. Ser-132 is subject to Phosphoserine. Residues Asn-144, Asn-291, Asn-328, Asn-354, and Asn-374 are each glycosylated (N-linked (GlcNAc...) asparagine). Ser-396 carries the post-translational modification Phosphoserine. The Nuclear localization signal motif lies at 443–447 (RQKNR).

Belongs to the clusterin family. In terms of assembly, antiparallel disulfide-linked heterodimer of an alpha chain and a beta chain. Self-associates and forms higher oligomers. Interacts with a broad range of misfolded proteins, including APP, APOC2 and LYZ. Slightly acidic pH promotes interaction with misfolded proteins. Forms high-molecular weight oligomers upon interaction with misfolded proteins. Interacts with APOA1, LRP2, CLUAP1 and PON1. Interacts with the complement membrane attack complex. Interacts (via alpha chain) with XRCC6. Interacts with SYVN1, COMMD1, BTRC, CUL1 and with ubiquitin and SCF (SKP1-CUL1-F-box protein) E3 ubiquitin-protein ligase complexes. Interacts (via alpha chain) with BAX in stressed cells, where BAX undergoes a conformation change leading to association with the mitochondrial membrane. Does not interact with BAX in unstressed cells. Found in a complex with LTF, CLU, EPPIN and SEMG1. Interacts (immaturely glycosylated pre-secreted form) with HSPA5; this interaction promotes CLU stability and facilitates stress-induced CLU retrotranslocation from the secretory pathway to the mitochondria, thereby reducing stress-induced apoptosis by stabilizing mitochondrial membrane integrity. Interacts with BCL2L1; this interaction releases and activates BAX and promotes cell death. Interacts with TGFBR2 and ACVR1. Interacts (secreted form) with STMN3; this interaction may act as an important modulator during neuronal differentiation. Interacts with VLDLR and LRP8. Post-translationally, proteolytically cleaved on its way through the secretory system, probably within the Golgi lumen. Proteolytic cleavage is not necessary for its chaperone activity. All non-secreted forms are not proteolytically cleaved. Chaperone activity of uncleaved forms is dependent on a non-reducing environment. Polyubiquitinated, leading to proteasomal degradation. Under cellular stress, the intracellular level of cleaved form is reduced due to proteasomal degradation. In terms of processing, heavily N-glycosylated. About 30% of the protein mass is comprised of complex N-linked carbohydrate. Endoplasmic reticulum (ER) stress induces changes in glycosylation status and increases level of hypoglycosylated forms. Core carbohydrates are essential for chaperone activity. Non-secreted forms are hypoglycosylated or unglycosylated.

It localises to the secreted. Its subcellular location is the nucleus. The protein resides in the cytoplasm. The protein localises to the mitochondrion membrane. It is found in the cytosol. It localises to the microsome. Its subcellular location is the endoplasmic reticulum. The protein resides in the mitochondrion. The protein localises to the perinuclear region. It is found in the cytoplasmic vesicle. It localises to the secretory vesicle. Its subcellular location is the chromaffin granule. Functions as extracellular chaperone that prevents aggregation of non native proteins. Prevents stress-induced aggregation of blood plasma proteins. Inhibits formation of amyloid fibrils by APP, APOC2, B2M, CALCA, CSN3, SNCA and aggregation-prone LYZ variants (in vitro). Does not require ATP. Maintains partially unfolded proteins in a state appropriate for subsequent refolding by other chaperones, such as HSPA8/HSC70. Does not refold proteins by itself. Binding to cell surface receptors triggers internalization of the chaperone-client complex and subsequent lysosomal or proteasomal degradation. When secreted, protects cells against apoptosis and against cytolysis by complement: inhibits assembly of the complement membrane attack complex (MAC) by preventing polymerization of C9 pore component of the MAC complex. Intracellular forms interact with ubiquitin and SCF (SKP1-CUL1-F-box protein) E3 ubiquitin-protein ligase complexes and promote the ubiquitination and subsequent proteasomal degradation of target proteins. Promotes proteasomal degradation of COMMD1 and IKBKB. Modulates NF-kappa-B transcriptional activity. Following stress, promotes apoptosis. Inhibits apoptosis when associated with the mitochondrial membrane by interference with BAX-dependent release of cytochrome c into the cytoplasm. Plays a role in the regulation of cell proliferation. An intracellular form suppresses stress-induced apoptosis by stabilizing mitochondrial membrane integrity through interaction with HSPA5. Secreted form does not affect caspase or BAX-mediated intrinsic apoptosis and TNF-induced NF-kappa-B-activity. Secreted form act as an important modulator during neuronal differentiation through interaction with STMN3. Plays a role in the clearance of immune complexes that arise during cell injury. The polypeptide is Clusterin (CLU) (Equus caballus (Horse)).